A 79-amino-acid chain; its full sequence is Large ribosomal subunit protein uL24 (79 aa).

It belongs to the universal ribosomal protein uL24 family. In terms of assembly, part of the 50S ribosomal subunit.

One of two assembly initiator proteins, it binds directly to the 5'-end of the 23S rRNA, where it nucleates assembly of the 50S subunit. Its function is as follows. One of the proteins that surrounds the polypeptide exit tunnel on the outside of the subunit. The sequence is that of Large ribosomal subunit protein uL24 from Lactobacillus gasseri (strain ATCC 33323 / DSM 20243 / BCRC 14619 / CIP 102991 / JCM 1131 / KCTC 3163 / NCIMB 11718 / NCTC 13722 / AM63).